Reading from the N-terminus, the 374-residue chain is Ribosomal RNA large subunit methyltransferase G (374 aa).

Belongs to the methyltransferase superfamily. RlmG family.

It is found in the cytoplasm. It carries out the reaction guanosine(1835) in 23S rRNA + S-adenosyl-L-methionine = N(2)-methylguanosine(1835) in 23S rRNA + S-adenosyl-L-homocysteine + H(+). Specifically methylates the guanine in position 1835 (m2G1835) of 23S rRNA. The sequence is that of Ribosomal RNA large subunit methyltransferase G from Pseudomonas paraeruginosa (strain DSM 24068 / PA7) (Pseudomonas aeruginosa (strain PA7)).